A 332-amino-acid chain; its full sequence is Nicotianamine synthase 1 (332 aa).

This sequence belongs to the nicotianamine synthase (NAS)-like family. In terms of tissue distribution, expressed in roots.

It carries out the reaction 3 S-adenosyl-L-methionine = nicotianamine + 3 S-methyl-5'-thioadenosine + 3 H(+). In terms of biological role, synthesizes nicotianamine, a polyamine that is the first intermediate in the synthesis of the phytosiderophores of the mugineic acid type found in gramineae which serve as a sensor for the physiological iron status within the plant, and/or might be involved in the transport of iron. The chain is Nicotianamine synthase 1 (NAS1) from Oryza sativa subsp. indica (Rice).